We begin with the raw amino-acid sequence, 438 residues long: MRSVISRIDLRGNPADPRASLPRAEIDVASAVEKVRPICEDVRHRGVEALIELGERFDGVRPAHIRVPADALETALAGLDRTVRAALEEAIRRARIVHRDQRRTDTTTRVVPGGTVTERWVPVDRVGLYVPGGRAVYPSSVVMNVVPAQEAGVPSLAVASPPQAEFGGLPHPTILAACALLGVDEVYAVGGAQAIAMFAYGAGECAPVSMVTGPGNIWVAAAKRLLKGIIGIDSEAGPTEIAILADDTANPAYVAADLISQAEHDVVAASVLVTPSTALADRVEAELARQVPAAKHRERITQALGGPQSGIVLVDDIDHGLDVVNAYAPEHLEVMTADAQSVAARVRNAGAIFIGDHSPVSLGDYCAGSNHVLPTGGVAVHSSGLSVQSFLRGIHVVEYDRAALAEVAHHVVALAEAEDLPAHGAAVTARIPREEQQA.

The NAD(+) site is built by Tyr129, Gln193, and Asn216. Substrate contacts are provided by Thr239, Gln261, and His264. 2 residues coordinate Zn(2+): Gln261 and His264. Residues Glu330 and His331 each act as proton acceptor in the active site. The substrate site is built by His331, Asp364, Glu418, and His423. Asp364 contacts Zn(2+). His423 contributes to the Zn(2+) binding site.

This sequence belongs to the histidinol dehydrogenase family. The cofactor is Zn(2+).

It catalyses the reaction L-histidinol + 2 NAD(+) + H2O = L-histidine + 2 NADH + 3 H(+). The protein operates within amino-acid biosynthesis; L-histidine biosynthesis; L-histidine from 5-phospho-alpha-D-ribose 1-diphosphate: step 9/9. Catalyzes the sequential NAD-dependent oxidations of L-histidinol to L-histidinaldehyde and then to L-histidine. The chain is Histidinol dehydrogenase from Thermobifida fusca (strain YX).